The chain runs to 361 residues: D-amino-acid oxidase (361 aa).

Positions 1–22 (MSNTIVVVGAGVIGLTSALLLS) are cleaved as a signal peptide. Positions 10, 13, 34, 35, 45, 46, 50, and 52 each coordinate FAD. N-linked (GlcNAc...) asparagine glycosylation is found at asparagine 193 and asparagine 222. Residues tyrosine 242, tyrosine 258, and arginine 305 each contribute to the (R)-lactate site. Tyrosine 242, tyrosine 258, and arginine 305 together coordinate anthranilate. FAD contacts are provided by arginine 305, serine 332, glycine 335, tyrosine 336, and glutamine 337. The Microbody targeting signal signature appears at 359–361 (SKL).

It belongs to the DAMOX/DASOX family. FAD serves as cofactor. The N-terminus is blocked.

It is found in the peroxisome matrix. The catalysed reaction is a D-alpha-amino acid + O2 + H2O = a 2-oxocarboxylate + H2O2 + NH4(+). Its function is as follows. Catalyzes the oxidative deamination of D-amino acids with broad substrate specificity. Enables the organism to utilize D-amino acids as a source of nutrients. In Fusarium vanettenii (Neocosmospora pisi), this protein is D-amino-acid oxidase.